The sequence spans 143 residues: Antitumor antibiotic C-1027 apoprotein (143 aa).

A signal peptide spans 1–33 (MSLRHMSRRASRFGVVAVASIGLAAAAQSVAFA). 2 cysteine pairs are disulfide-bonded: Cys69–Cys78 and Cys119–Cys124.

It belongs to the neocarzinostatin family.

Its function is as follows. Binds non-covalently to a chromophore which is the cytotoxic and mutagenic component of the antibiotic. The chromophore binds to DNA as a weak intercalator and causes single- and double-strand breaks. This chain is Antitumor antibiotic C-1027 apoprotein (cagA), found in Streptomyces globisporus.